The chain runs to 529 residues: Polygalacturonase (529 aa).

An N-terminal signal peptide occupies residues 1–21; that stretch reads MNHRYTLLALAAAALSAGAHA. The Proton donor role is filled by aspartate 305. Histidine 331 is an active-site residue. The required for PGA export across the outer membrane and catalytic activity stretch occupies residues 516-529; the sequence is AFVPLKSVAPTSPI.

The protein belongs to the glycosyl hydrolase 28 family. In terms of assembly, monomer.

It localises to the secreted. It carries out the reaction (1,4-alpha-D-galacturonosyl)n+m + H2O = (1,4-alpha-D-galacturonosyl)n + (1,4-alpha-D-galacturonosyl)m.. In terms of biological role, contributes to the wilt disease production on tomato. This is Polygalacturonase (pglA) from Ralstonia solanacearum (Pseudomonas solanacearum).